Consider the following 247-residue polypeptide: Ribonuclease PH (247 aa).

Residues Arg-87 and 125-127 contribute to the phosphate site; that span reads GTR.

This sequence belongs to the RNase PH family. Homohexameric ring arranged as a trimer of dimers.

The catalysed reaction is tRNA(n+1) + phosphate = tRNA(n) + a ribonucleoside 5'-diphosphate. Its function is as follows. Phosphorolytic 3'-5' exoribonuclease that plays an important role in tRNA 3'-end maturation. Removes nucleotide residues following the 3'-CCA terminus of tRNAs; can also add nucleotides to the ends of RNA molecules by using nucleoside diphosphates as substrates, but this may not be physiologically important. Probably plays a role in initiation of 16S rRNA degradation (leading to ribosome degradation) during starvation. The chain is Ribonuclease PH from Trichormus variabilis (strain ATCC 29413 / PCC 7937) (Anabaena variabilis).